Reading from the N-terminus, the 156-residue chain is Cytochrome c-type biogenesis protein CcmE (156 aa).

Over 1-7 (MTRRQRR) the chain is Cytoplasmic. A helical; Signal-anchor for type II membrane protein transmembrane segment spans residues 8–28 (LGILLAALVCAGAATALTLNA). Topologically, residues 29 to 156 (FRSNLVFFFS…AKESARSASR (128 aa)) are periplasmic. Positions 123 and 127 each coordinate heme.

Belongs to the CcmE/CycJ family.

Its subcellular location is the cell inner membrane. Its function is as follows. Heme chaperone required for the biogenesis of c-type cytochromes. Transiently binds heme delivered by CcmC and transfers the heme to apo-cytochromes in a process facilitated by CcmF and CcmH. The sequence is that of Cytochrome c-type biogenesis protein CcmE from Ralstonia pickettii (strain 12J).